The sequence spans 141 residues: Large ribosomal subunit protein uL11 (141 aa).

The protein belongs to the universal ribosomal protein uL11 family. Part of the ribosomal stalk of the 50S ribosomal subunit. Interacts with L10 and the large rRNA to form the base of the stalk. L10 forms an elongated spine to which L12 dimers bind in a sequential fashion forming a multimeric L10(L12)X complex. Post-translationally, one or more lysine residues are methylated.

In terms of biological role, forms part of the ribosomal stalk which helps the ribosome interact with GTP-bound translation factors. The sequence is that of Large ribosomal subunit protein uL11 from Methylacidiphilum infernorum (isolate V4) (Methylokorus infernorum (strain V4)).